The following is a 689-amino-acid chain: DNA ligase (689 aa).

NAD(+) contacts are provided by residues 40-44 (DAEYD), 89-90 (SL), and glutamate 121. Catalysis depends on lysine 123, which acts as the N6-AMP-lysine intermediate. Arginine 144, glutamate 179, lysine 295, and lysine 319 together coordinate NAD(+). 4 residues coordinate Zn(2+): cysteine 413, cysteine 416, cysteine 431, and cysteine 437. A BRCT domain is found at 610–689 (RAQSSLTGKI…EEWLTLIKNA (80 aa)).

Belongs to the NAD-dependent DNA ligase family. LigA subfamily. Mg(2+) is required as a cofactor. Mn(2+) serves as cofactor.

It carries out the reaction NAD(+) + (deoxyribonucleotide)n-3'-hydroxyl + 5'-phospho-(deoxyribonucleotide)m = (deoxyribonucleotide)n+m + AMP + beta-nicotinamide D-nucleotide.. Its function is as follows. DNA ligase that catalyzes the formation of phosphodiester linkages between 5'-phosphoryl and 3'-hydroxyl groups in double-stranded DNA using NAD as a coenzyme and as the energy source for the reaction. It is essential for DNA replication and repair of damaged DNA. This chain is DNA ligase, found in Rickettsia akari (strain Hartford).